We begin with the raw amino-acid sequence, 177 residues long: Large ribosomal subunit protein uL10 (177 aa).

It belongs to the universal ribosomal protein uL10 family. Part of the ribosomal stalk of the 50S ribosomal subunit. The N-terminus interacts with L11 and the large rRNA to form the base of the stalk. The C-terminus forms an elongated spine to which L12 dimers bind in a sequential fashion forming a multimeric L10(L12)X complex.

In terms of biological role, forms part of the ribosomal stalk, playing a central role in the interaction of the ribosome with GTP-bound translation factors. This Legionella pneumophila (strain Corby) protein is Large ribosomal subunit protein uL10.